The following is a 335-amino-acid chain: Glycerol-3-phosphate dehydrogenase [NAD(P)+] (335 aa).

NADPH contacts are provided by S10, F11, R31, and K105. The sn-glycerol 3-phosphate site is built by K105, G136, and S138. A140 serves as a coordination point for NADPH. K191, D244, S254, R255, and N256 together coordinate sn-glycerol 3-phosphate. K191 acts as the Proton acceptor in catalysis. R255 is an NADPH binding site. NADPH is bound by residues V279 and E281.

Belongs to the NAD-dependent glycerol-3-phosphate dehydrogenase family.

It localises to the cytoplasm. It catalyses the reaction sn-glycerol 3-phosphate + NAD(+) = dihydroxyacetone phosphate + NADH + H(+). The catalysed reaction is sn-glycerol 3-phosphate + NADP(+) = dihydroxyacetone phosphate + NADPH + H(+). The protein operates within membrane lipid metabolism; glycerophospholipid metabolism. In terms of biological role, catalyzes the reduction of the glycolytic intermediate dihydroxyacetone phosphate (DHAP) to sn-glycerol 3-phosphate (G3P), the key precursor for phospholipid synthesis. This Leptospira borgpetersenii serovar Hardjo-bovis (strain L550) protein is Glycerol-3-phosphate dehydrogenase [NAD(P)+].